The primary structure comprises 267 residues: Ribosomal RNA small subunit methyltransferase A (267 aa).

Positions 18, 20, 45, 66, 91, and 112 each coordinate S-adenosyl-L-methionine.

The protein belongs to the class I-like SAM-binding methyltransferase superfamily. rRNA adenine N(6)-methyltransferase family. RsmA subfamily.

The protein localises to the cytoplasm. The catalysed reaction is adenosine(1518)/adenosine(1519) in 16S rRNA + 4 S-adenosyl-L-methionine = N(6)-dimethyladenosine(1518)/N(6)-dimethyladenosine(1519) in 16S rRNA + 4 S-adenosyl-L-homocysteine + 4 H(+). Specifically dimethylates two adjacent adenosines (A1518 and A1519) in the loop of a conserved hairpin near the 3'-end of 16S rRNA in the 30S particle. May play a critical role in biogenesis of 30S subunits. This Shewanella pealeana (strain ATCC 700345 / ANG-SQ1) protein is Ribosomal RNA small subunit methyltransferase A.